The sequence spans 131 residues: Ribonuclease VapC3 (131 aa).

Residues 4–121 (VVDASAIAAL…GKLLTLDRQL (118 aa)) enclose the PINc domain. Mg(2+) is bound by residues aspartate 6, aspartate 100, and aspartate 118.

Belongs to the PINc/VapC protein family. In terms of assembly, homodimer. Forms a complex with putative antitoxin VapB3, possibly VapB(2)-VapC(2). Mg(2+) serves as cofactor.

With respect to regulation, inhibited by EDTA. Toxic component of a type II toxin-antitoxin (TA) system. Has ribonuclease activity. This Pyrobaculum aerophilum (strain ATCC 51768 / DSM 7523 / JCM 9630 / CIP 104966 / NBRC 100827 / IM2) protein is Ribonuclease VapC3.